The chain runs to 537 residues: T-complex protein 1 subunit theta (537 aa).

The protein belongs to the TCP-1 chaperonin family. As to quaternary structure, heterooligomeric complex.

Its subcellular location is the cytoplasm. Functionally, molecular chaperone; assists the folding of proteins upon ATP hydrolysis. Known to play a role, in vitro, in the folding of actin and tubulin. The chain is T-complex protein 1 subunit theta (cct8) from Dictyostelium discoideum (Social amoeba).